Reading from the N-terminus, the 267-residue chain is Undecaprenyl-diphosphatase (267 aa).

8 helical membrane passes run M1–I21, Q39–F59, A83–M103, L111–V131, T144–T164, F189–T209, F218–L238, and G245–L265.

It belongs to the UppP family.

The protein localises to the cell inner membrane. The enzyme catalyses di-trans,octa-cis-undecaprenyl diphosphate + H2O = di-trans,octa-cis-undecaprenyl phosphate + phosphate + H(+). Its function is as follows. Catalyzes the dephosphorylation of undecaprenyl diphosphate (UPP). Confers resistance to bacitracin. This chain is Undecaprenyl-diphosphatase, found in Vibrio parahaemolyticus serotype O3:K6 (strain RIMD 2210633).